A 133-amino-acid chain; its full sequence is ATP synthase epsilon chain (133 aa).

The protein belongs to the ATPase epsilon chain family. In terms of assembly, F-type ATPases have 2 components, CF(1) - the catalytic core - and CF(0) - the membrane proton channel. CF(1) has five subunits: alpha(3), beta(3), gamma(1), delta(1), epsilon(1). CF(0) has three main subunits: a, b and c.

The protein localises to the cell membrane. Functionally, produces ATP from ADP in the presence of a proton gradient across the membrane. The polypeptide is ATP synthase epsilon chain (Clostridium botulinum (strain 657 / Type Ba4)).